A 394-amino-acid chain; its full sequence is 1-deoxy-D-xylulose 5-phosphate reductoisomerase (394 aa).

NADPH contacts are provided by threonine 12, glycine 13, serine 14, isoleucine 15, glycine 38, asparagine 41, and asparagine 132. 1-deoxy-D-xylulose 5-phosphate is bound at residue lysine 133. Residue glutamate 134 participates in NADPH binding. Aspartate 156 lines the Mn(2+) pocket. Positions 157, 158, 182, and 205 each coordinate 1-deoxy-D-xylulose 5-phosphate. Glutamate 158 lines the Mn(2+) pocket. An NADPH-binding site is contributed by glycine 211. Positions 218, 223, 224, and 227 each coordinate 1-deoxy-D-xylulose 5-phosphate. Residue glutamate 227 participates in Mn(2+) binding.

The protein belongs to the DXR family. Mg(2+) serves as cofactor. The cofactor is Mn(2+).

The enzyme catalyses 2-C-methyl-D-erythritol 4-phosphate + NADP(+) = 1-deoxy-D-xylulose 5-phosphate + NADPH + H(+). Its pathway is isoprenoid biosynthesis; isopentenyl diphosphate biosynthesis via DXP pathway; isopentenyl diphosphate from 1-deoxy-D-xylulose 5-phosphate: step 1/6. In terms of biological role, catalyzes the NADPH-dependent rearrangement and reduction of 1-deoxy-D-xylulose-5-phosphate (DXP) to 2-C-methyl-D-erythritol 4-phosphate (MEP). The sequence is that of 1-deoxy-D-xylulose 5-phosphate reductoisomerase from Paenarthrobacter aurescens (strain TC1).